Consider the following 348-residue polypeptide: Sorbitol dehydrogenase (348 aa).

The Zn(2+) site is built by Cys-40, His-65, and Glu-66. NAD(+) contacts are provided by residues Ile-179, Asp-199, Arg-204, Val-269–Ile-271, and Ser-293–Arg-295. Substrate is bound at residue Arg-295.

The protein belongs to the zinc-containing alcohol dehydrogenase family. As to quaternary structure, homotetramer. Zn(2+) is required as a cofactor.

It carries out the reaction xylitol + NAD(+) = D-xylulose + NADH + H(+). It catalyses the reaction L-iditol + NAD(+) = keto-L-sorbose + NADH + H(+). The catalysed reaction is keto-D-fructose + NADH + H(+) = D-sorbitol + NAD(+). Polyol dehydrogenase that catalyzes the reversible NAD(+)-dependent oxidation of various sugar alcohols. Is active with xylitol, L-iditol and D-sorbitol (D-glucitol) as substrates, leading to the C2-oxidized products D-xylulose, L-sorbose and D-fructose, respectively. Is a key enzyme in the polyol pathway that interconverts glucose and fructose via sorbitol, which constitutes an important alternate route for glucose metabolism. This Bombyx mori (Silk moth) protein is Sorbitol dehydrogenase (SDH).